The sequence spans 265 residues: Putative methyltransferase 235L (265 aa).

Positions 1 to 17 are cleaved as a signal peptide; the sequence is MDICICYFFTILTTISC.

Belongs to the methyltransferase superfamily.

This chain is Putative methyltransferase 235L, found in Acheta domesticus (House cricket).